We begin with the raw amino-acid sequence, 907 residues long: Envelope glycoprotein B (907 aa).

The N-terminal stretch at 1 to 22 (MESRIWCLVVCVNLCIVCLGAA) is a signal peptide. The Virion surface portion of the chain corresponds to 23–751 (VSSSSTRGTS…EGVATFLKNP (729 aa)). The segment at 29–62 (RGTSATHSHHSSHTTSAAHSRSGSVSQRVTSSQT) is disordered. Positions 41-62 (HTTSAAHSRSGSVSQRVTSSQT) are enriched in low complexity. Residues Asn-68, Asn-73, and Asn-85 are each glycosylated (N-linked (GlcNAc...) asparagine; by host). Intrachain disulfides connect Cys-94–Cys-551, Cys-111–Cys-507, Cys-185–Cys-250, and Cys-344–Cys-391. Residues 152–158 (SYAYIHT) form an involved in fusion and/or binding to host membrane region. N-linked (GlcNAc...) asparagine; by host glycosylation occurs at Asn-208. Positions 237–244 (GSTWLYRE) are involved in fusion and/or binding to host membrane. Residues Asn-281, Asn-286, Asn-302, Asn-341, Asn-383, Asn-405, Asn-409, Asn-417, Asn-447, Asn-452, Asn-456, Asn-466, Asn-555, and Asn-586 are each glycosylated (N-linked (GlcNAc...) asparagine; by host). Residues Cys-574 and Cys-611 are joined by a disulfide bond. Hydrophobic membrane proximal region stretches follow at residues 697–749 (VEDK…TFLK) and 708–748 (YLKG…ATFL). The chain crosses the membrane as a helical span at residues 752-772 (FGAFTIILVAIAVVIIIYLIY). Residues 773–907 (TRQRRLCMQP…LKDSDEEENV (135 aa)) lie on the Intravirion side of the membrane. Composition is skewed to polar residues over residues 798-810 (VTSG…SLQA) and 860-877 (RAQQ…GTQD). Disordered regions lie at residues 798-838 (VTSG…TAAP) and 860-907 (RAQQ…EENV). Residues 878 to 887 (KGQKPNLLDR) are compositionally biased toward basic and acidic residues. Positions 895-898 (YRHL) match the Internalization motif motif.

This sequence belongs to the herpesviridae glycoprotein B family. As to quaternary structure, homotrimer; disulfide-linked. Binds to heparan sulfate proteoglycans. Interacts with gH/gL heterodimer. Interacts with host C-type lectin CD209/DC-SIGN. Interacts with host ITGB1, EGFR, and PDGFRA. A proteolytic cleavage by host furin generates two subunits that remain linked by disulfide bonds.

The protein resides in the virion membrane. The protein localises to the host cell membrane. It is found in the host endosome membrane. It localises to the host Golgi apparatus membrane. In terms of biological role, envelope glycoprotein that plays a role in host cell entry, cell to-cell virus transmission, and fusion of infected cells. May be involved in the initial attachment via binding to heparan sulfate together with the gM/gN complex that binds heparin with higher affinity. Interacts with host integrin ITGB1, PDGFRA and EGFR that likely serve as postattachment entry receptors. Also participates in the fusion of viral and cellular membranes leading to virus entry into the host cell. Membrane fusion is mediated by the fusion machinery composed at least of gB and the heterodimer gH/gL. This chain is Envelope glycoprotein B, found in Homo sapiens (Human).